The sequence spans 404 residues: Glucose-1-phosphate adenylyltransferase (404 aa).

Residues Tyr99, Gly164, 179 to 180 (EK), and Ser197 each bind alpha-D-glucose 1-phosphate.

This sequence belongs to the bacterial/plant glucose-1-phosphate adenylyltransferase family.

It catalyses the reaction alpha-D-glucose 1-phosphate + ATP + H(+) = ADP-alpha-D-glucose + diphosphate. Its pathway is capsule biogenesis; capsule polysaccharide biosynthesis. The protein operates within glycan biosynthesis; glycogen biosynthesis. In terms of biological role, involved in the biosynthesis of ADP-glucose, a building block, required in the biosynthesis of maltose-1-phosphate (M1P) and in the elongation reactions to produce linear alpha-1,4-glucans. Catalyzes the reaction between ATP and alpha-D-glucose 1-phosphate (G1P) to produce pyrophosphate and ADP-Glc. This chain is Glucose-1-phosphate adenylyltransferase, found in Mycobacterium leprae (strain Br4923).